We begin with the raw amino-acid sequence, 180 residues long: ATP-dependent protease subunit HslV (180 aa).

Threonine 2 is a catalytic residue. Glycine 158, cysteine 161, and threonine 164 together coordinate Na(+).

The protein belongs to the peptidase T1B family. HslV subfamily. As to quaternary structure, a double ring-shaped homohexamer of HslV is capped on each side by a ring-shaped HslU homohexamer. The assembly of the HslU/HslV complex is dependent on binding of ATP.

It localises to the cytoplasm. The catalysed reaction is ATP-dependent cleavage of peptide bonds with broad specificity.. Its activity is regulated as follows. Allosterically activated by HslU binding. Protease subunit of a proteasome-like degradation complex believed to be a general protein degrading machinery. This chain is ATP-dependent protease subunit HslV, found in Baumannia cicadellinicola subsp. Homalodisca coagulata.